Here is a 718-residue protein sequence, read N- to C-terminus: Glycine--tRNA ligase beta subunit (718 aa).

The protein belongs to the class-II aminoacyl-tRNA synthetase family. In terms of assembly, tetramer of two alpha and two beta subunits.

Its subcellular location is the cytoplasm. The catalysed reaction is tRNA(Gly) + glycine + ATP = glycyl-tRNA(Gly) + AMP + diphosphate. The chain is Glycine--tRNA ligase beta subunit from Mesorhizobium japonicum (strain LMG 29417 / CECT 9101 / MAFF 303099) (Mesorhizobium loti (strain MAFF 303099)).